Consider the following 1465-residue polypeptide: DNA polymerase III PolC-type (1465 aa).

One can recognise an Exonuclease domain in the interval 427 to 583 (YVVFDVETTG…YDAEATGRLL (157 aa)).

Belongs to the DNA polymerase type-C family. PolC subfamily.

The protein resides in the cytoplasm. The enzyme catalyses DNA(n) + a 2'-deoxyribonucleoside 5'-triphosphate = DNA(n+1) + diphosphate. Its function is as follows. Required for replicative DNA synthesis. This DNA polymerase also exhibits 3' to 5' exonuclease activity. This chain is DNA polymerase III PolC-type, found in Streptococcus pyogenes serotype M5 (strain Manfredo).